The following is a 291-amino-acid chain: Protease HtpX homolog (291 aa).

A run of 2 helical transmembrane segments spans residues 4–24 and 39–59; these read ILLF…VASL and SALL…SLLI. A Zn(2+)-binding site is contributed by histidine 144. The active site involves glutamate 145. A Zn(2+)-binding site is contributed by histidine 148. 2 helical membrane passes run 159-179 and 199-219; these read LIQG…GYAV and VSTI…VAWF. Residue glutamate 224 participates in Zn(2+) binding.

The protein belongs to the peptidase M48B family. Zn(2+) is required as a cofactor.

It localises to the cell inner membrane. This chain is Protease HtpX homolog, found in Polaromonas naphthalenivorans (strain CJ2).